A 519-amino-acid chain; its full sequence is Circadian clock oscillator protein KaiC (519 aa).

KaiC domains lie at 1 to 246 (MSEK…VNIF) and 260 to 519 (VRVS…GSDS). 19 residues coordinate ATP: glycine 48, threonine 49, glycine 50, lysine 51, threonine 52, leucine 53, lysine 223, leucine 224, arginine 225, threonine 227, histidine 229, threonine 239, threonine 289, glycine 290, threonine 291, glycine 292, lysine 293, threonine 294, and leucine 295. A Mg(2+)-binding site is contributed by threonine 52. Residue threonine 294 coordinates Mg(2+). Position 317 (glutamate 317) interacts with Mg(2+). An ATP-binding site is contributed by tryptophan 330. At serine 430 the chain carries Phosphoserine; by autocatalysis. Threonine 431 carries the phosphothreonine; by autocatalysis modification. 7 residues coordinate ATP: arginine 450, lysine 456, methionine 457, arginine 458, serine 460, histidine 462, and lysine 464.

This sequence belongs to the KaiC family. Homohexamer; hexamerization is dependent on ATP-binding. The KaiABC complex composition changes during the circadian cycle to control KaiC phosphorylation. Complexes KaiC(6), KaiA(2-4):KaiC(6), KaiB(6):KaiC(6) and KaiC(6):KaiB(6):KaiA(12) are among the most important forms, many form cooperatively. KaiC interacts with SasA, activating its autokinase function and leading to RpaA activation. It depends on Mg(2+) as a cofactor. Post-translationally, phosphorylated on serine and threonine residues by autocatalysis. Has a 4 step phosphorylation cycle; the autokinase acts first on Thr-431, then Ser-430. When Ser-430 is modified KaiC switches to an autophosphatase mode, acting first on phospho-Thr-431 then phospho-Ser-430.

It catalyses the reaction L-seryl-[protein] + ATP = O-phospho-L-seryl-[protein] + ADP + H(+). It carries out the reaction L-threonyl-[protein] + ATP = O-phospho-L-threonyl-[protein] + ADP + H(+). The catalysed reaction is ATP + H2O = ADP + phosphate + H(+). Its activity is regulated as follows. The interaction with KaiA enhances its phosphorylation status, while the interaction with KaiB decreases it. In terms of biological role, central component of the KaiABC oscillator complex, which constitutes the main circadian regulator in cyanobacteria. Complex composition changes during the circadian cycle to control KaiC phosphorylation. KaiA stimulates KaiC autophosphorylation, while KaiB sequesters KaiA, leading to KaiC autodephosphorylation. Clock output pathways impact the RpaA transcriptional regulator. KaiC enhances the autophosphorylation activity of SasA, which then transfers its phosphate group to RpaA to activate it. KaiB and KaiC together enhance the phospho-RpaA dephosphatase activity of CikA. Its function is as follows. Has a weak, temperature-independent ATPase activity; ATPase activity defines the circadian period. The phosphorylation state of KaiC modulates its ATPase activity and effects KaiB binding. The protein is Circadian clock oscillator protein KaiC of Nostoc sp. (strain PCC 7120 / SAG 25.82 / UTEX 2576).